A 202-amino-acid chain; its full sequence is dITP/XTP pyrophosphatase (202 aa).

10-15 is a binding site for substrate; the sequence is TSNRHK. Asp-70 (proton acceptor) is an active-site residue. Asp-70 is a Mg(2+) binding site. Substrate-binding positions include Ser-71, 153-156, Lys-176, and 181-182; these read FGYD and HR.

Belongs to the HAM1 NTPase family. Homodimer. It depends on Mg(2+) as a cofactor.

It carries out the reaction XTP + H2O = XMP + diphosphate + H(+). The catalysed reaction is dITP + H2O = dIMP + diphosphate + H(+). It catalyses the reaction ITP + H2O = IMP + diphosphate + H(+). Pyrophosphatase that catalyzes the hydrolysis of nucleoside triphosphates to their monophosphate derivatives, with a high preference for the non-canonical purine nucleotides XTP (xanthosine triphosphate), dITP (deoxyinosine triphosphate) and ITP. Seems to function as a house-cleaning enzyme that removes non-canonical purine nucleotides from the nucleotide pool, thus preventing their incorporation into DNA/RNA and avoiding chromosomal lesions. In Methylacidiphilum infernorum (isolate V4) (Methylokorus infernorum (strain V4)), this protein is dITP/XTP pyrophosphatase.